The primary structure comprises 315 residues: Type II restriction enzyme AvaI (315 aa).

It carries out the reaction Endonucleolytic cleavage of DNA to give specific double-stranded fragments with terminal 5'-phosphates.. A P subtype restriction enzyme that recognizes the double-stranded sequence 5'-CYCGRG-3' and cleaves after C-1. This chain is Type II restriction enzyme AvaI, found in Anabaena variabilis.